Consider the following 2250-residue polypeptide: DNA polymerase epsilon catalytic subunit A (2250 aa).

3 disordered regions span residues methionine 1–alanine 63, asparagine 235–proline 259, and proline 1990–serine 2010. Residues glycine 32–alanine 41 are compositionally biased toward gly residues. Residues aspartate 249 to proline 259 are compositionally biased toward basic and acidic residues. The segment covering proline 1990–proline 2000 has biased composition (polar residues). Positions 2118, 2121, 2156, and 2159 each coordinate Zn(2+). The CysA-type zinc finger occupies cysteine 2118–cysteine 2159. [4Fe-4S] cluster-binding residues include cysteine 2190, cysteine 2193, cysteine 2205, and cysteine 2207. The CysB motif motif lies at cysteine 2190–cysteine 2207.

The protein belongs to the DNA polymerase type-B family. In terms of assembly, heterotetramer. Consists of 4 subunits: POL2, DPB2, DPB3 and DPB4. The cofactor is [4Fe-4S] cluster.

The protein localises to the nucleus. The catalysed reaction is DNA(n) + a 2'-deoxyribonucleoside 5'-triphosphate = DNA(n+1) + diphosphate. In terms of biological role, DNA polymerase II participates in chromosomal DNA replication. This Cryptococcus neoformans var. neoformans serotype D (strain JEC21 / ATCC MYA-565) (Filobasidiella neoformans) protein is DNA polymerase epsilon catalytic subunit A (POL2).